The chain runs to 397 residues: Argininosuccinate synthase (397 aa).

ATP is bound at residue 8–16 (AYSGGLDTS). L-citrulline-binding residues include Y86 and S91. G116 contacts ATP. L-aspartate-binding residues include T118, N122, and D123. Position 122 (N122) interacts with L-citrulline. L-citrulline is bound by residues R126, S175, S184, E260, and Y272.

This sequence belongs to the argininosuccinate synthase family. Type 1 subfamily. Homotetramer.

It is found in the cytoplasm. The catalysed reaction is L-citrulline + L-aspartate + ATP = 2-(N(omega)-L-arginino)succinate + AMP + diphosphate + H(+). It participates in amino-acid biosynthesis; L-arginine biosynthesis; L-arginine from L-ornithine and carbamoyl phosphate: step 2/3. This Clostridium botulinum (strain Langeland / NCTC 10281 / Type F) protein is Argininosuccinate synthase.